We begin with the raw amino-acid sequence, 364 residues long: Acetylserotonin O-methyltransferase 1 (364 aa).

Positions 208, 231, 251, and 265 each coordinate S-adenosyl-L-homocysteine. Residue histidine 269 is the Proton acceptor of the active site. Residues glutamate 300 and glutamate 330 contribute to the active site.

The protein belongs to the class I-like SAM-binding methyltransferase superfamily. Cation-independent O-methyltransferase family. As to quaternary structure, homodimer. In terms of tissue distribution, expressed in leaves, stems and flowers.

It localises to the cytoplasm. The enzyme catalyses N-acetylserotonin + S-adenosyl-L-methionine = melatonin + S-adenosyl-L-homocysteine + H(+). It functions in the pathway aromatic compound metabolism; melatonin biosynthesis; melatonin from serotonin: step 1/2. Functionally, methyltransferase which catalyzes the transfer of a methyl group onto N-acetylserotonin, producing melatonin (N-acetyl-5-methoxytryptamine). The protein is Acetylserotonin O-methyltransferase 1 of Oryza sativa subsp. japonica (Rice).